We begin with the raw amino-acid sequence, 460 residues long: Cysteine--tRNA ligase (460 aa).

C28 contacts Zn(2+). The short motif at 30–40 (MTVYDYCHLGH) is the 'HIGH' region element. The Zn(2+) site is built by C209, H234, and E238. Residues 266–270 (KMSKS) carry the 'KMSKS' region motif. K269 is a binding site for ATP.

This sequence belongs to the class-I aminoacyl-tRNA synthetase family. As to quaternary structure, monomer. Requires Zn(2+) as cofactor.

The protein resides in the cytoplasm. It catalyses the reaction tRNA(Cys) + L-cysteine + ATP = L-cysteinyl-tRNA(Cys) + AMP + diphosphate. This is Cysteine--tRNA ligase from Pseudomonas fluorescens (strain ATCC BAA-477 / NRRL B-23932 / Pf-5).